We begin with the raw amino-acid sequence, 156 residues long: Small ribosomal subunit protein uS7 (156 aa).

It belongs to the universal ribosomal protein uS7 family. As to quaternary structure, part of the 30S ribosomal subunit. Contacts proteins S9 and S11.

Its function is as follows. One of the primary rRNA binding proteins, it binds directly to 16S rRNA where it nucleates assembly of the head domain of the 30S subunit. Is located at the subunit interface close to the decoding center, probably blocks exit of the E-site tRNA. The chain is Small ribosomal subunit protein uS7 from Actinobacillus succinogenes (strain ATCC 55618 / DSM 22257 / CCUG 43843 / 130Z).